The sequence spans 2271 residues: Protein Ycf2 (2271 aa).

Residue 1628–1635 (GSIGTGRS) participates in ATP binding.

It belongs to the Ycf2 family.

Its subcellular location is the plastid. The protein localises to the chloroplast stroma. In terms of biological role, probable ATPase of unknown function. Its presence in a non-photosynthetic plant (Epifagus virginiana) and experiments in tobacco indicate that it has an essential function which is probably not related to photosynthesis. The protein is Protein Ycf2 of Illicium oligandrum (Star anise).